Here is a 286-residue protein sequence, read N- to C-terminus: MSVVTACITPFKADLSIDFAALESVVRSQEHAGNGVFLFGSTGESLSLAYEEKFAALSFVSTLKLNVPLFLGVTATSIQEAISWIEFAQRWPIDGFFVPTPLYTKPGLYGQKVWFEKILSVSKKPIILYNNPSRTGVALHPEVVKSLASHPLCMGVKDSGGSTQACTLFAESGVRVFCGDDGMWPEMRLSGASGLVSVLSNVWPELARDYVAQCRSIDAWKKTCSWLELSVNPLGIKALMAAQKMIECELVRPPLSIRDFQERDQLADILACRAILQAELLSVCVQ.

Residue threonine 42 coordinates pyruvate. Residue tyrosine 129 is the Proton donor/acceptor of the active site. The active-site Schiff-base intermediate with substrate is the lysine 157. Pyruvate is bound at residue valine 196.

Belongs to the DapA family. As to quaternary structure, homotetramer; dimer of dimers.

The protein resides in the cytoplasm. The enzyme catalyses L-aspartate 4-semialdehyde + pyruvate = (2S,4S)-4-hydroxy-2,3,4,5-tetrahydrodipicolinate + H2O + H(+). Its pathway is amino-acid biosynthesis; L-lysine biosynthesis via DAP pathway; (S)-tetrahydrodipicolinate from L-aspartate: step 3/4. Its function is as follows. Catalyzes the condensation of (S)-aspartate-beta-semialdehyde [(S)-ASA] and pyruvate to 4-hydroxy-tetrahydrodipicolinate (HTPA). The chain is 4-hydroxy-tetrahydrodipicolinate synthase from Chlamydia muridarum (strain MoPn / Nigg).